The sequence spans 238 residues: 7-cyano-7-deazaguanine synthase (238 aa).

12–22 (FSGGQDSTTCL) serves as a coordination point for ATP. 4 residues coordinate Zn(2+): Cys191, Cys200, Cys203, and Cys206.

Belongs to the QueC family. Requires Zn(2+) as cofactor.

It catalyses the reaction 7-carboxy-7-deazaguanine + NH4(+) + ATP = 7-cyano-7-deazaguanine + ADP + phosphate + H2O + H(+). It functions in the pathway purine metabolism; 7-cyano-7-deazaguanine biosynthesis. In terms of biological role, catalyzes the ATP-dependent conversion of 7-carboxy-7-deazaguanine (CDG) to 7-cyano-7-deazaguanine (preQ(0)). This chain is 7-cyano-7-deazaguanine synthase, found in Shewanella oneidensis (strain ATCC 700550 / JCM 31522 / CIP 106686 / LMG 19005 / NCIMB 14063 / MR-1).